We begin with the raw amino-acid sequence, 152 residues long: Cornifin-A (152 aa).

A disordered region spans residues 20 to 40; sequence EVKQPCQPPPQEPCAPKTKEP. A run of 14 repeats spans residues 27–34, 35–42, 43–49, 50–57, 58–65, 66–73, 74–81, 82–89, 90–97, 98–105, 106–113, 114–121, 122–129, and 130–137. The 14 X 8 AA approximate tandem repeats stretch occupies residues 27–137; sequence PPPQEPCAPK…CQPVVPEPCP (111 aa).

The protein belongs to the cornifin (SPRR) family. In terms of tissue distribution, in squamous epithelia lining the nasal vestibule and in the hard palate.

Its subcellular location is the cytoplasm. Cross-linked envelope protein of keratinocytes. It is a keratinocyte protein that first appears in the cell cytosol, but ultimately becomes cross-linked to membrane proteins by transglutaminase. All that results in the formation of an insoluble envelope beneath the plasma membrane. This is Cornifin-A (Sprr1a) from Rattus norvegicus (Rat).